The following is a 512-amino-acid chain: Putative ribose/galactose/methyl galactoside import ATP-binding protein 1 (512 aa).

2 ABC transporter domains span residues 14–251 (IALT…VGRQ) and 262–507 (TSAN…TQRE). 46–53 (GENGAGKS) provides a ligand contact to ATP.

Belongs to the ABC transporter superfamily. Carbohydrate importer 2 (CUT2) (TC 3.A.1.2) family.

The protein resides in the cell inner membrane. It carries out the reaction D-ribose(out) + ATP + H2O = D-ribose(in) + ADP + phosphate + H(+). The enzyme catalyses D-galactose(out) + ATP + H2O = D-galactose(in) + ADP + phosphate + H(+). In terms of biological role, part of an ABC transporter complex involved in carbohydrate import. Could be involved in ribose, galactose and/or methyl galactoside import. Responsible for energy coupling to the transport system. The protein is Putative ribose/galactose/methyl galactoside import ATP-binding protein 1 of Burkholderia lata (strain ATCC 17760 / DSM 23089 / LMG 22485 / NCIMB 9086 / R18194 / 383).